A 490-amino-acid chain; its full sequence is Betaine aldehyde dehydrogenase (490 aa).

D93 contacts K(+). Position 150–152 (150–152) interacts with NAD(+); it reads GAW. Catalysis depends on K162, which acts as the Charge relay system. NAD(+) is bound at residue 176–179; the sequence is KPSE. V180 contacts K(+). An NAD(+)-binding site is contributed by 230–233; it reads GIAS. A K(+)-binding site is contributed by L246. E252 acts as the Proton acceptor in catalysis. The NAD(+) site is built by G254, C286, and E387. The active-site Nucleophile is C286. C286 is subject to Cysteine sulfenic acid (-SOH). Positions 457 and 460 each coordinate K(+). E464 serves as the catalytic Charge relay system.

It belongs to the aldehyde dehydrogenase family. As to quaternary structure, dimer of dimers. K(+) is required as a cofactor.

The catalysed reaction is betaine aldehyde + NAD(+) + H2O = glycine betaine + NADH + 2 H(+). It functions in the pathway amine and polyamine biosynthesis; betaine biosynthesis via choline pathway; betaine from betaine aldehyde: step 1/1. In terms of biological role, involved in the biosynthesis of the osmoprotectant glycine betaine. Catalyzes the irreversible oxidation of betaine aldehyde to the corresponding acid. In Yersinia pestis, this protein is Betaine aldehyde dehydrogenase.